Here is a 117-residue protein sequence, read N- to C-terminus: Venom protein TxLP11 (117 aa).

The N-terminal stretch at 1 to 22 (MNTKTLIVVFLVCLLVSEVVLA) is a signal peptide.

Post-translationally, contains 4 disulfide bonds. As to expression, expressed by the venom gland.

The protein localises to the secreted. The sequence is that of Venom protein TxLP11 from Lychas mucronatus (Chinese swimming scorpion).